The sequence spans 247 residues: Adenosylcobinamide-GDP ribazoletransferase (247 aa).

5 helical membrane passes run Ile34 to Val54, Cys59 to Phe79, Gly113 to Leu133, Ile138 to Tyr158, and Val194 to Ile214.

Belongs to the CobS family. It depends on Mg(2+) as a cofactor.

Its subcellular location is the cell inner membrane. It carries out the reaction alpha-ribazole + adenosylcob(III)inamide-GDP = adenosylcob(III)alamin + GMP + H(+). The enzyme catalyses alpha-ribazole 5'-phosphate + adenosylcob(III)inamide-GDP = adenosylcob(III)alamin 5'-phosphate + GMP + H(+). Its pathway is cofactor biosynthesis; adenosylcobalamin biosynthesis; adenosylcobalamin from cob(II)yrinate a,c-diamide: step 7/7. Joins adenosylcobinamide-GDP and alpha-ribazole to generate adenosylcobalamin (Ado-cobalamin). Also synthesizes adenosylcobalamin 5'-phosphate from adenosylcobinamide-GDP and alpha-ribazole 5'-phosphate. This chain is Adenosylcobinamide-GDP ribazoletransferase, found in Escherichia coli O157:H7.